Consider the following 210-residue polypeptide: Claudin-4 (210 aa).

Topologically, residues 1 to 7 are cytoplasmic; that stretch reads MASMGLQ. The interaction with EPHA2 stretch occupies residues 1–103; sequence MASMGLQVMG…GVLLSVVGGK (103 aa). Residues 8–28 traverse the membrane as a helical segment; the sequence is VMGIALAVLGWLGAILSCALP. Residues 29–81 lie on the Extracellular side of the membrane; it reads MWRVTAFIGSNIVTSQTIWEGLWMNCVVQSTGQMQCKVYDSLLALPQDLQAAR. Residues Cys-54 and Cys-64 are joined by a disulfide bond. Residues 82-102 form a helical membrane-spanning segment; it reads ALMVVSIILAALGVLLSVVGG. Topologically, residues 103–117 are cytoplasmic; that stretch reads KCTNCVEDESAKAKT. The chain crosses the membrane as a helical span at residues 118-138; the sequence is MIVAGVVFLLAGLLVMVPASW. Topologically, residues 139-160 are extracellular; that stretch reads TANNIIRDFYNPLVVSGQKREM. Residues 161 to 181 form a helical membrane-spanning segment; that stretch reads GASLYVGWAASGLLLLGGALL. Residues 182–210 lie on the Cytoplasmic side of the membrane; that stretch reads CCNCPPRADKPYSAKYSAAARSAPASNYV. The residue at position 209 (Tyr-209) is a Phosphotyrosine. Residues 209-210 are interactions with TJP1, TJP2 and TJP3; the sequence is YV.

It belongs to the claudin family. As to quaternary structure, can form heteropolymeric strands with other claudins. Interacts with CLDN8. Interacts with CLDN1. Directly interacts with TJP1/ZO-1. Interacts with TJP2/ZO-2 and TJP3/ZO-3. Interacts with EPHA2; phosphorylates CLDN4 and may regulate tight junctions. In terms of processing, phosphorylated. Phosphorylation by EPHA2 is stimulated by EFNA1 and alters interaction with TJP1.

The protein localises to the cell junction. It is found in the tight junction. Its subcellular location is the cell membrane. It carries out the reaction chloride(in) = chloride(out). The catalysed reaction is bromide(in) = bromide(out). The enzyme catalyses iodide(out) = iodide(in). It catalyses the reaction fluoride(in) = fluoride(out). Its function is as follows. Can associate with other claudins to regulate tight junction structural and functional strand dynamics. May coassemble with CLDN8 into tight junction strands containing anion-selective channels that convey paracellular chloride permeability in renal collecting ducts. May integrate into CLDN3 strands to modulate localized tight junction barrier properties. May disrupt strand assembly of channel-forming CLDN2 and CLDN15 and inhibit cation conductance. Cannot form tight junction strands on its own. The sequence is that of Claudin-4 (CLDN4) from Canis lupus familiaris (Dog).